We begin with the raw amino-acid sequence, 952 residues long: Ubiquitin carboxyl-terminal hydrolase 15 (952 aa).

Ala2 is subject to N-acetylalanine. Residues 2 to 223 are mediates interaction with SART3; it reads AEGGAADLDT…KNEDGTWPRG (222 aa). The 112-residue stretch at 7–118 folds into the DUSP domain; sequence ADLDTQRSDI…GQEPIARKVV (112 aa). Positions 260 to 904 constitute a USP domain; that stretch reads CGLSNLGNTC…AAYVLFYQRQ (645 aa). The Nucleophile role is filled by Cys269. Thr573 is modified (phosphothreonine). The segment at 597–665 is disordered; that stretch reads ETDGPLRCCE…GGDNDSENGL (69 aa). Acidic residues predominate over residues 627 to 644; it reads METDEPDDESSQDQELPS. Residue His862 is the Proton acceptor of the active site. The disordered stretch occupies residues 923–952; the sequence is SAATGVPLESDEDSNDNDNDLENENCMHTN. The segment covering 931 to 945 has biased composition (acidic residues); sequence ESDEDSNDNDNDLEN. Ser932 and Ser936 each carry phosphoserine.

The protein belongs to the peptidase C19 family. As to quaternary structure, a homodimer structure has been reported; however it is unclear whether the protein form a homodimer in vivo. Identified in a complex with the COP9 signalosome complex (CSN). Interacts with SMAD1, SMAD2 and SMAD3; the interaction is direct. Forms a complex with SMURF2 and SMAD7. Interacts with TGFBR1. Interacts with SART3; the interaction is direct. May interact with RNF20 and RNF40. May interact with PRKN. Interacts with INCA1. Post-translationally, phosphorylated. Phosphorylation protects against ubiquitination and subsequent degradation by the proteasome. In terms of processing, ubiquitinated, leading to degradation by the proteasome. In terms of tissue distribution, highly expressed in testis and spleen, and at lower level in other tissues.

It is found in the cytoplasm. The protein resides in the nucleus. The protein localises to the mitochondrion. It carries out the reaction Thiol-dependent hydrolysis of ester, thioester, amide, peptide and isopeptide bonds formed by the C-terminal Gly of ubiquitin (a 76-residue protein attached to proteins as an intracellular targeting signal).. In terms of biological role, hydrolase that removes conjugated ubiquitin from target proteins and regulates various pathways such as the TGF-beta receptor signaling, NF-kappa-B and RNF41/NRDP1-PRKN pathways. Acts as a key regulator of TGF-beta receptor signaling pathway, but the precise mechanism is still unclear: according to a report, acts by promoting deubiquitination of monoubiquitinated R-SMADs (SMAD1, SMAD2 and/or SMAD3), thereby alleviating inhibition of R-SMADs and promoting activation of TGF-beta target genes. According to another reports, regulates the TGF-beta receptor signaling pathway by mediating deubiquitination and stabilization of TGFBR1, leading to an enhanced TGF-beta signal. Able to mediate deubiquitination of monoubiquitinated substrates, 'Lys-27'-, 'Lys-48'- and 'Lys-63'-linked polyubiquitin chains. May also regulate gene expression and/or DNA repair through the deubiquitination of histone H2B. Acts as an inhibitor of mitophagy by counteracting the action of parkin (PRKN): hydrolyzes cleavage of 'Lys-48'- and 'Lys-63'-linked polyubiquitin chains attached by parkin on target proteins such as MFN2, thereby reducing parkin's ability to drive mitophagy. Acts as an associated component of COP9 signalosome complex (CSN) and regulates different pathways via this association: regulates NF-kappa-B by mediating deubiquitination of NFKBIA and deubiquitinates substrates bound to VCP. Involved in endosome organization by mediating deubiquitination of SQSTM1: ubiquitinated SQSTM1 forms a molecular bridge that restrains cognate vesicles in the perinuclear region and its deubiquitination releases target vesicles for fast transport into the cell periphery. Acts as a negative regulator of antifungal immunity by mediating 'Lys-27'-linked deubiquitination of CARD9, thereby inactivating CARD9. This chain is Ubiquitin carboxyl-terminal hydrolase 15 (Usp15), found in Rattus norvegicus (Rat).